The following is a 356-amino-acid chain: MRMQWIWKSRRSLQNVFIRRSSQYHKPFWRRPLPATLLGCAVLGVAAVYFAKPSPIDENYPRSVAKYLHEALYRQKGENNHDFQDAWKAYQSAIKQAESEKMDMESPPVQGIRLQMANLLASAGALHKAWSMYWDILERTSKLPDFLEQRVLIASKLIELSEPLGLQKDATKAADLIVKALLSKQFNGDDEQKSRLFEQSATLYFQAGTPSYAVPLYHEALNLTMANPSCHGLILMNNLATSLLAQTETVDKKHHETLMKQSQSWSQKAVDSYYFAYPKDRNQECHAGCAAAFYTLGQIAERQGNIDLALKHYKNSEALRKDDPYNDGSMLSHIAIDRLDKDAFIKKLDKSSSPTD.

The N-terminal 20 residues, 1 to 20, are a transit peptide targeting the mitochondrion; sequence MRMQWIWKSRRSLQNVFIRR. TPR repeat units lie at residues 194–227 and 290–323; these read SRLFEQSATLYFQAGTPSYAVPLYHEALNLTMAN and AAAFYTLGQIAERQGNIDLALKHYKNSEALRKDD.

The protein localises to the mitochondrion. This chain is TPR repeat-containing protein P27G11.02, found in Schizosaccharomyces pombe (strain 972 / ATCC 24843) (Fission yeast).